The following is a 239-amino-acid chain: Serine protease SplC (239 aa).

Positions 1 to 36 (MNKNIVIKSMAALAILTSVTGINAAVVEETQQIANA) are cleaved as a signal peptide. Active-site charge relay system residues include H75, D113, and S193.

Belongs to the peptidase S1B family.

Its subcellular location is the secreted. The chain is Serine protease SplC (splC) from Staphylococcus aureus.